The sequence spans 189 residues: Interleukin-23 subunit alpha (189 aa).

A signal peptide spans 1–19; that stretch reads MLGSRAVMLLLLLPWTAQG. The cysteines at positions 77 and 89 are disulfide-linked.

Belongs to the IL-6 superfamily. Heterodimer with IL12B; disulfide-linked. The heterodimer is known as interleukin IL-23. Interacts with IL23R; this interaction enables recruitment of IL12RB1. Secreted by activated dendritic and phagocytic cells and keratinocytes. Also expressed by dermal Langerhans cells (at protein level).

It localises to the secreted. Its function is as follows. Associates with IL12B to form the pro-inflammatory cytokine IL-23 that plays different roles in innate and adaptive immunity. Released by antigen-presenting cells such as dendritic cells or macrophages, binds to a heterodimeric receptor complex composed of IL12RB1 and IL23R to activate JAK2 and TYK2 which then phosphorylate the receptor to form a docking site leading to the phosphorylation of STAT3 and STAT4. This process leads to activation of several pathways including p38 MAPK or NF-kappa-B and promotes the production of pro-inflammatory cytokines such as interleukin-17A/IL17A. In turn, participates in the early and effective intracellular bacterial clearance. Promotes the expansion and survival of T-helper 17 cells, a CD4-positive helper T-cell subset that produces IL-17, as well as other IL-17-producing cells. In Homo sapiens (Human), this protein is Interleukin-23 subunit alpha (IL23A).